Consider the following 562-residue polypeptide: NAD-dependent malic enzyme 1 (562 aa).

Residue Tyr-101 is the Proton donor of the active site. Residue Arg-154 coordinates NAD(+). The active-site Proton acceptor is Lys-172. A divalent metal cation is bound by residues Glu-243, Asp-244, and Asp-267. NAD(+)-binding residues include Asp-267 and Asn-415.

The protein belongs to the malic enzymes family. As to quaternary structure, homotetramer. Requires Mg(2+) as cofactor. Mn(2+) serves as cofactor.

The catalysed reaction is (S)-malate + NAD(+) = pyruvate + CO2 + NADH. It catalyses the reaction oxaloacetate + H(+) = pyruvate + CO2. This Vibrio vulnificus (strain YJ016) protein is NAD-dependent malic enzyme 1.